A 53-amino-acid polypeptide reads, in one-letter code: Conotoxin Ac4.3b (53 aa).

Positions 1 to 11 are excised as a propeptide; that stretch reads SDVRNAAVHER. A Pyrrolidone carboxylic acid modification is found at Gln-12. Glu-14 bears the 4-carboxyglutamate mark. Ser-18 is a glycosylation site (O-linked (HexNAc...) serine). 4-hydroxyproline is present on residues Pro-28, Pro-33, and Pro-48. Pro-48 is modified (proline amide). A propeptide spanning residues 49–53 is cleaved from the precursor; it reads GRRND.

Belongs to the conotoxin A superfamily. In terms of processing, contains 3 disulfide bonds. As to expression, expressed by the venom duct.

The protein resides in the secreted. Its function is as follows. Probable neurotoxin with ion channel inhibitor activity. This Conus achatinus (Little frog cone) protein is Conotoxin Ac4.3b.